A 93-amino-acid polypeptide reads, in one-letter code: Sec-independent protein translocase protein TatA (93 aa).

Residues 1–21 (MGSLSPWHWAILAVVVILLFG) traverse the membrane as a helical segment. A disordered region spans residues 45–93 (EMQSENKTETSALGAQSESSAANPTPVQSQRVDPPAPSEQGHSEARPAS). Residues 53–75 (ETSALGAQSESSAANPTPVQSQR) are compositionally biased toward polar residues.

It belongs to the TatA/E family. As to quaternary structure, the Tat system comprises two distinct complexes: a TatABC complex, containing multiple copies of TatA, TatB and TatC subunits, and a separate TatA complex, containing only TatA subunits. Substrates initially bind to the TatABC complex, which probably triggers association of the separate TatA complex to form the active translocon.

The protein localises to the cell membrane. In terms of biological role, part of the twin-arginine translocation (Tat) system that transports large folded proteins containing a characteristic twin-arginine motif in their signal peptide across membranes. TatA could form the protein-conducting channel of the Tat system. The chain is Sec-independent protein translocase protein TatA from Mycolicibacterium paratuberculosis (strain ATCC BAA-968 / K-10) (Mycobacterium paratuberculosis).